A 393-amino-acid polypeptide reads, in one-letter code: NAD(P)H-quinone oxidoreductase subunit H, chloroplastic (393 aa).

The protein belongs to the complex I 49 kDa subunit family. In terms of assembly, NDH is composed of at least 16 different subunits, 5 of which are encoded in the nucleus.

It is found in the plastid. The protein localises to the chloroplast thylakoid membrane. The enzyme catalyses a plastoquinone + NADH + (n+1) H(+)(in) = a plastoquinol + NAD(+) + n H(+)(out). It carries out the reaction a plastoquinone + NADPH + (n+1) H(+)(in) = a plastoquinol + NADP(+) + n H(+)(out). In terms of biological role, NDH shuttles electrons from NAD(P)H:plastoquinone, via FMN and iron-sulfur (Fe-S) centers, to quinones in the photosynthetic chain and possibly in a chloroplast respiratory chain. The immediate electron acceptor for the enzyme in this species is believed to be plastoquinone. Couples the redox reaction to proton translocation, and thus conserves the redox energy in a proton gradient. The protein is NAD(P)H-quinone oxidoreductase subunit H, chloroplastic of Nicotiana tomentosiformis (Tobacco).